We begin with the raw amino-acid sequence, 266 residues long: NADP-dependent mannitol dehydrogenase (266 aa).

NADP(+) contacts are provided by S53, N107, and K140. The active-site Proton donor is the S159. NADP(+) contacts are provided by Y174, K178, I206, and T208. Y174 functions as the Proton acceptor in the catalytic mechanism. The active-site Lowers pKa of active site Tyr is K178.

The protein belongs to the short-chain dehydrogenases/reductases (SDR) family. As to quaternary structure, homotetramer.

It carries out the reaction D-mannitol + NADP(+) = D-fructose + NADPH + H(+). Functionally, D-mannitol 2-dehydrogenase which is not necessary for D-mannitol catabolism. D-mannitol metabolism occurs via at least two different routes involving mannitol dehydrogenase (MDH) or mannitol 1-phosphate dehydrogenase, and the exact physiological role of mannitol dehydrogenases remains unclear. In Hypocrea jecorina (strain ATCC 56765 / BCRC 32924 / NRRL 11460 / Rut C-30) (Trichoderma reesei), this protein is NADP-dependent mannitol dehydrogenase.